The chain runs to 1589 residues: Centrosomal protein of 170 kDa protein B (1589 aa).

An FHA domain is found at 23–73; that stretch reads IFVGREECELMLQSRSVDKQHAVINYDQDRDEHWVKDLGSLNGTFVNDMRI. 4 disordered regions span residues 130-261, 287-309, 325-388, and 409-583; these read RSEA…GAAP, ITKFSLRQRRPPGKEATPGEMVS, LLHR…RLQR, and FDED…EVEE. 2 stretches are compositionally biased toward basic and acidic residues: residues 147–156 and 243–253; these read RPEKGDRRPG and PAHEMPTKDAE. Positions 330–344 are enriched in basic and acidic residues; it reads GPGDDRHSTKSDLPV. Phosphoserine occurs at positions 360 and 421. 2 stretches are compositionally biased toward basic and acidic residues: residues 430–446 and 467–476; these read PKADKRRGPTPADRDRP and LKREKTEERL. The span at 478 to 489 shows a compositional bias: low complexity; it reads SPSPASRTPARP. A phosphoserine mark is found at Ser-480 and Ser-492. Residues 520-530 are compositionally biased toward pro residues; it reads EKVPPVLPAPL. Ser-536 bears the Phosphoserine mark. Over residues 538–548 the composition is skewed to pro residues; sequence VGPPTPPPAPT. Thr-542 is modified (phosphothreonine). Ser-597, Ser-619, Ser-655, Ser-711, Ser-721, Ser-746, Ser-748, Ser-751, Ser-753, Ser-772, Ser-829, Ser-853, Ser-954, Ser-972, Ser-986, and Ser-988 each carry phosphoserine. 4 disordered regions span residues 598–895, 934–1316, 1350–1374, and 1532–1552; these read PELS…LQDL, DAEC…PYGF, DGDTLGSSEPAHSASLSNMPSTPAS, and AQPGLGKGRVAAQSPPSPASA. A compositionally biased stretch (low complexity) spans 711–722; the sequence is SPAGPESSRRSG. Positions 957–972 are enriched in polar residues; it reads DTASTVSLRSGKSGPS. Positions 1029–1038 are enriched in basic residues; sequence SAIRRGHRPR. A phosphoserine mark is found at Ser-1135, Ser-1179, and Ser-1199. The segment covering 1221–1230 has biased composition (polar residues); the sequence is AANTATTTGP. Low complexity predominate over residues 1286-1301; it reads PRAGSSSRARSRAPGP. Position 1304 is a phosphothreonine (Thr-1304). 2 positions are modified to phosphoserine: Ser-1356 and Ser-1362. Residues 1363-1374 are compositionally biased toward polar residues; it reads ASLSNMPSTPAS. Residues 1542–1552 show a composition bias toward low complexity; it reads AAQSPPSPASA. Phosphoserine occurs at positions 1545 and 1548.

The protein belongs to the CEP170 family.

Its subcellular location is the cytoplasm. The protein resides in the cytoskeleton. Functionally, plays a role in microtubule organization. In Homo sapiens (Human), this protein is Centrosomal protein of 170 kDa protein B (CEP170B).